A 356-amino-acid polypeptide reads, in one-letter code: Protein RecA (356 aa).

Residue 68–75 coordinates ATP; the sequence is GQESSGKT.

Belongs to the RecA family.

Its subcellular location is the cytoplasm. Can catalyze the hydrolysis of ATP in the presence of single-stranded DNA, the ATP-dependent uptake of single-stranded DNA by duplex DNA, and the ATP-dependent hybridization of homologous single-stranded DNAs. It interacts with LexA causing its activation and leading to its autocatalytic cleavage. The polypeptide is Protein RecA (Thermotoga petrophila (strain ATCC BAA-488 / DSM 13995 / JCM 10881 / RKU-1)).